The sequence spans 139 residues: ATP synthase epsilon chain (139 aa).

It belongs to the ATPase epsilon chain family. In terms of assembly, F-type ATPases have 2 components, CF(1) - the catalytic core - and CF(0) - the membrane proton channel. CF(1) has five subunits: alpha(3), beta(3), gamma(1), delta(1), epsilon(1). CF(0) has three main subunits: a, b and c.

Its subcellular location is the cell membrane. Produces ATP from ADP in the presence of a proton gradient across the membrane. The polypeptide is ATP synthase epsilon chain (Streptococcus sanguinis).